Consider the following 302-residue polypeptide: Acetaldehyde dehydrogenase 1 (302 aa).

An NAD(+)-binding site is contributed by 12–15; the sequence is SGNI. The active-site Acyl-thioester intermediate is the C127. Residues 158 to 166 and N277 contribute to the NAD(+) site; that span reads SAGPGTRAN.

This sequence belongs to the acetaldehyde dehydrogenase family.

The enzyme catalyses acetaldehyde + NAD(+) + CoA = acetyl-CoA + NADH + H(+). The sequence is that of Acetaldehyde dehydrogenase 1 from Mycobacteroides abscessus (strain ATCC 19977 / DSM 44196 / CCUG 20993 / CIP 104536 / JCM 13569 / NCTC 13031 / TMC 1543 / L948) (Mycobacterium abscessus).